The following is a 1215-amino-acid chain: Chromosome segregation protein sudA (1215 aa).

Residue G32 to S39 participates in ATP binding. Residues K177 to S522 are a coiled coil. A disordered region spans residues S313 to A332. Residues E538 to A650 form the SMC hinge domain. Residues G654–H676 are disordered. Residues D684–Y1091 are a coiled coil.

It belongs to the SMC family. SMC3 subfamily.

Its subcellular location is the nucleus. In terms of biological role, involved in chromosome segregation in mitosis. This Emericella nidulans (strain FGSC A4 / ATCC 38163 / CBS 112.46 / NRRL 194 / M139) (Aspergillus nidulans) protein is Chromosome segregation protein sudA (sudA).